A 264-amino-acid chain; its full sequence is 3-methyl-2-oxobutanoate hydroxymethyltransferase (264 aa).

Mg(2+)-binding residues include D45 and D84. Residues D45–S46, D84, and K112 contribute to the 3-methyl-2-oxobutanoate site. Mg(2+) is bound at residue E114. The Proton acceptor role is filled by E181.

This sequence belongs to the PanB family. As to quaternary structure, homodecamer; pentamer of dimers. Mg(2+) is required as a cofactor.

The protein resides in the cytoplasm. It catalyses the reaction 3-methyl-2-oxobutanoate + (6R)-5,10-methylene-5,6,7,8-tetrahydrofolate + H2O = 2-dehydropantoate + (6S)-5,6,7,8-tetrahydrofolate. Its pathway is cofactor biosynthesis; (R)-pantothenate biosynthesis; (R)-pantoate from 3-methyl-2-oxobutanoate: step 1/2. Catalyzes the reversible reaction in which hydroxymethyl group from 5,10-methylenetetrahydrofolate is transferred onto alpha-ketoisovalerate to form ketopantoate. This is 3-methyl-2-oxobutanoate hydroxymethyltransferase from Escherichia coli O127:H6 (strain E2348/69 / EPEC).